Here is a 368-residue protein sequence, read N- to C-terminus: GTPase Obg (368 aa).

The region spanning 1–159 (MQFIDQAEIE…RQLRLELKLL (159 aa)) is the Obg domain. One can recognise an OBG-type G domain in the interval 160 to 328 (AEVGIIGLPN…LMQLVWQWLD (169 aa)). GTP-binding positions include 166 to 173 (GLPNAGKS), 191 to 195 (FTTLV), 213 to 216 (DIPG), 280 to 283 (NKID), and 309 to 311 (SAA). The Mg(2+) site is built by serine 173 and threonine 193.

Belongs to the TRAFAC class OBG-HflX-like GTPase superfamily. OBG GTPase family. As to quaternary structure, monomer. It depends on Mg(2+) as a cofactor.

Its subcellular location is the cytoplasm. In terms of biological role, an essential GTPase which binds GTP, GDP and possibly (p)ppGpp with moderate affinity, with high nucleotide exchange rates and a fairly low GTP hydrolysis rate. Plays a role in control of the cell cycle, stress response, ribosome biogenesis and in those bacteria that undergo differentiation, in morphogenesis control. The polypeptide is GTPase Obg (Synechocystis sp. (strain ATCC 27184 / PCC 6803 / Kazusa)).